We begin with the raw amino-acid sequence, 126 residues long: 14 kDa phosphohistidine phosphatase (126 aa).

Position 22 (Lys22) interacts with substrate. Catalysis depends on His54, which acts as the Proton acceptor. Ser95–Gly97 contributes to the substrate binding site.

It belongs to the janus family. As to quaternary structure, monomer.

Its subcellular location is the cytoplasm. It catalyses the reaction N(pros)-phospho-L-histidyl-[protein] + H2O = L-histidyl-[protein] + phosphate. It carries out the reaction N(tele)-phospho-L-histidyl-[protein] + H2O = L-histidyl-[protein] + phosphate. Functionally, exhibits phosphohistidine phosphatase activity. This Sus scrofa (Pig) protein is 14 kDa phosphohistidine phosphatase (PHPT1).